Consider the following 955-residue polypeptide: UPF0182 protein syc2310_c (955 aa).

Transmembrane regions (helical) follow at residues 12–32 (IAAIALGLSLLTRIHIETLWF), 45–65 (LAVQALLFSVVGIAITGLIGG), 85–105 (LQLGGLLTVLTLLWIALLALT), 141–161 (GSWPLGMGLLLGVGSLVLFLW), 163–183 (PWPLLIGLSSLTSLAIALLTS), 224–244 (FDLWIGLAFSFCAVLAVYYLA), 263–283 (HLVRLAIAIALFLAGHCWLAQ), 306–326 (LPLLQVWMILFGIAAIALFWQ), and 343–363 (AAIASVLIWVTLPAIVQQLVV).

It belongs to the UPF0182 family.

Its subcellular location is the cell membrane. The polypeptide is UPF0182 protein syc2310_c (Synechococcus sp. (strain ATCC 27144 / PCC 6301 / SAUG 1402/1) (Anacystis nidulans)).